The sequence spans 20 residues: 7.2 kDa cytotoxin RVV-7 (20 aa).

As to quaternary structure, monomer. Homodimerizes during storage at 30 degrees Celsius (observed after 3 days). As to expression, expressed by the venom gland.

Its subcellular location is the secreted. It localises to the target cell membrane. Functionally, this three-finger cytotoxin shows cytotoxicity and direct nephrotoxicity. The cytotoxicity has been observed on B16F10 melanoma cells (EC(50)=2.56 uM) and on kidney proximal tubular epithelium LLCPK1 cells (EC(50)=4.79 uM); it is due to necrotic cell death and not to apoptosis. Direct nephrotoxicity has been deduced from binding to LLCPK1 cell line and to kidney membranes. In addition, after intravenous injection into mice tail vein, the toxin principally accumulates in kidney, but only minimally in blood, liver and brain. The polypeptide is 7.2 kDa cytotoxin RVV-7 (Daboia russelii (Russel's viper)).